The primary structure comprises 355 residues: Aminopeptidase N (355 aa).

Residues Glu-156 and 290–294 (GAMEN) contribute to the substrate site. Zn(2+) is bound at residue His-326. Residue Glu-327 is the Proton acceptor of the active site. Zn(2+) contacts are provided by His-330 and Glu-349. Glu-349 contacts substrate.

The protein belongs to the peptidase M1 family. Zn(2+) serves as cofactor.

It is found in the cytoplasm. The enzyme catalyses Release of an N-terminal amino acid, Xaa-|-Yaa- from a peptide, amide or arylamide. Xaa is preferably Ala, but may be most amino acids including Pro (slow action). When a terminal hydrophobic residue is followed by a prolyl residue, the two may be released as an intact Xaa-Pro dipeptide.. In terms of biological role, aminopeptidase N is involved in the degradation of intracellular peptides generated by protein breakdown during normal growth as well as in response to nutrient starvation. The polypeptide is Aminopeptidase N (pepN) (Acetobacter pasteurianus (Acetobacter turbidans)).